The following is a 360-amino-acid chain: Nucleoporin SEH1 (360 aa).

WD repeat units follow at residues 10-49 (DHKD…DWHC), 55-96 (THSG…SNDK), 111-152 (DSRT…NLSQ), 160-210 (SCKL…RKYA), 217-258 (TVTD…KELT), and 276-315 (NHNS…NWKC). A Glycyl lysine isopeptide (Lys-Gly) (interchain with G-Cter in SUMO2) cross-link involves residue Lys-12. Residues Ser-179 and Ser-190 each carry the phosphoserine modification. The segment covering 324-354 (SPVNGSSQQGTSNPSLGSNIPSLQNSLNGSS) has biased composition (polar residues). Residues 324–360 (SPVNGSSQQGTSNPSLGSNIPSLQNSLNGSSAGRKHS) form a disordered region.

The protein belongs to the WD repeat SEC13 family. Component of the Nup107-160 subcomplex of the nuclear pore complex (NPC). The Nup107-160 subcomplex includes NUP160, NUP133, NUP107, NUP98, NUP85, NUP43, NUP37, SEH1 and SEC13. The SEH1 subunit appears to be only weakly associated with the Nup107-160 subcomplex. Component of the GATOR2 subcomplex, composed of MIOS, SEC13, SEH1L, WDR24 and WDR59. The GATOR2 complex interacts with CASTOR1 and CASTOR2; the interaction is negatively regulated by arginine. The GATOR2 complex interacts with SESN1, SESN2 and SESN3; the interaction is negatively regulated by amino acids. SESN1, SESN2 and SESN3 convey leucine availability via direct interaction with SEH1L and WDR24.

Its subcellular location is the chromosome. It is found in the centromere. It localises to the kinetochore. The protein localises to the nucleus. The protein resides in the nuclear pore complex. Its subcellular location is the lysosome membrane. With respect to regulation, the GATOR2 complex is negatively regulated by the upstream amino acid sensors CASTOR1 and SESN2, which sequester the GATOR2 complex in absence of amino acids. In the presence of abundant amino acids, GATOR2 is released from CASTOR1 and SESN2 and activated. Functionally, component of the Nup107-160 subcomplex of the nuclear pore complex (NPC). The Nup107-160 subcomplex is required for the assembly of a functional NPC. The Nup107-160 subcomplex is also required for normal kinetochore microtubule attachment, mitotic progression and chromosome segregation. This subunit plays a role in recruitment of the Nup107-160 subcomplex to the kinetochore. Its function is as follows. As a component of the GATOR2 complex, functions as an activator of the amino acid-sensing branch of the mTORC1 signaling pathway. The GATOR2 complex indirectly activates mTORC1 through the inhibition of the GATOR1 subcomplex. GATOR2 probably acts as an E3 ubiquitin-protein ligase toward GATOR1. In the presence of abundant amino acids, the GATOR2 complex mediates ubiquitination of the NPRL2 core component of the GATOR1 complex, leading to GATOR1 inactivation. In the absence of amino acids, GATOR2 is inhibited, activating the GATOR1 complex. Within the GATOR2 complex, SEC13 and SEH1L are required to stabilize the complex. The polypeptide is Nucleoporin SEH1 (SEH1L) (Pongo abelii (Sumatran orangutan)).